Reading from the N-terminus, the 513-residue chain is ATP synthase subunit alpha (513 aa).

ATP is bound at residue 169–176 (GDRQTGKT).

Belongs to the ATPase alpha/beta chains family. In terms of assembly, F-type ATPases have 2 components, CF(1) - the catalytic core - and CF(0) - the membrane proton channel. CF(1) has five subunits: alpha(3), beta(3), gamma(1), delta(1), epsilon(1). CF(0) has three main subunits: a(1), b(2) and c(9-12). The alpha and beta chains form an alternating ring which encloses part of the gamma chain. CF(1) is attached to CF(0) by a central stalk formed by the gamma and epsilon chains, while a peripheral stalk is formed by the delta and b chains.

The protein resides in the cell inner membrane. The enzyme catalyses ATP + H2O + 4 H(+)(in) = ADP + phosphate + 5 H(+)(out). In terms of biological role, produces ATP from ADP in the presence of a proton gradient across the membrane. The alpha chain is a regulatory subunit. The sequence is that of ATP synthase subunit alpha from Actinobacillus pleuropneumoniae serotype 7 (strain AP76).